We begin with the raw amino-acid sequence, 285 residues long: ATP synthase gamma chain (285 aa).

Belongs to the ATPase gamma chain family. F-type ATPases have 2 components, CF(1) - the catalytic core - and CF(0) - the membrane proton channel. CF(1) has five subunits: alpha(3), beta(3), gamma(1), delta(1), epsilon(1). CF(0) has three main subunits: a, b and c.

The protein resides in the cell membrane. Produces ATP from ADP in the presence of a proton gradient across the membrane. The gamma chain is believed to be important in regulating ATPase activity and the flow of protons through the CF(0) complex. This Halalkalibacterium halodurans (strain ATCC BAA-125 / DSM 18197 / FERM 7344 / JCM 9153 / C-125) (Bacillus halodurans) protein is ATP synthase gamma chain.